Reading from the N-terminus, the 48-residue chain is Large ribosomal subunit protein bL34c (48 aa).

The protein belongs to the bacterial ribosomal protein bL34 family.

The protein resides in the plastid. It localises to the chloroplast. This Thalassiosira pseudonana (Marine diatom) protein is Large ribosomal subunit protein bL34c.